Consider the following 216-residue polypeptide: Large ribosomal subunit protein uL1 (216 aa).

Belongs to the universal ribosomal protein uL1 family. As to quaternary structure, component of the large ribosomal subunit.

It is found in the cytoplasm. Its function is as follows. Component of the large ribosomal subunit. The ribosome is a large ribonucleoprotein complex responsible for the synthesis of proteins in the cell. This is Large ribosomal subunit protein uL1 (rpl10a) from Danio rerio (Zebrafish).